The primary structure comprises 75 residues: Small ribosomal subunit protein bS18 (75 aa).

It belongs to the bacterial ribosomal protein bS18 family. In terms of assembly, part of the 30S ribosomal subunit. Forms a tight heterodimer with protein bS6.

In terms of biological role, binds as a heterodimer with protein bS6 to the central domain of the 16S rRNA, where it helps stabilize the platform of the 30S subunit. This chain is Small ribosomal subunit protein bS18, found in Photobacterium profundum (strain SS9).